Here is a 239-residue protein sequence, read N- to C-terminus: Orotidine 5'-phosphate decarboxylase (239 aa).

Substrate is bound by residues Asp-15, Lys-37, 64 to 73 (DLKFHDIPNT), Thr-126, Arg-187, Gln-196, Gly-216, and Arg-217. The active-site Proton donor is Lys-66.

This sequence belongs to the OMP decarboxylase family. Type 1 subfamily. Homodimer.

It carries out the reaction orotidine 5'-phosphate + H(+) = UMP + CO2. The protein operates within pyrimidine metabolism; UMP biosynthesis via de novo pathway; UMP from orotate: step 2/2. Functionally, catalyzes the decarboxylation of orotidine 5'-monophosphate (OMP) to uridine 5'-monophosphate (UMP). This is Orotidine 5'-phosphate decarboxylase from Geobacter metallireducens (strain ATCC 53774 / DSM 7210 / GS-15).